Reading from the N-terminus, the 1909-residue chain is NFX1-type zinc finger-containing protein 1 (1909 aa).

Basic and acidic residues-rich tracts occupy residues 1-12 (MEDRRPHLEARP) and 76-107 (RNQE…EGRS). 2 disordered regions span residues 1-133 (MEDR…QPQQ) and 787-813 (TQSA…EEEG). A compositionally biased stretch (polar residues) spans 113–122 (SSDTFQQWHT). Positions 802–813 (EGEEEEEGEEEG) are enriched in acidic residues. Residues 939 to 964 (RRRILSYERQYRTWAERMAELRLQED) are a coiled coil. 4 NF-X1-type zinc fingers span residues 1291 to 1313 (CGHV…QCMK), 1375 to 1393 (CGHR…LCSE), 1433 to 1455 (CGHP…RCQQ), and 1463 to 1480 (CSHK…PCQR). Positions 1733–1764 (LAKKRLSFSSQELSDLQSEIQRLTYLVNLLMR) form a coiled coil. The RZ-type zinc finger occupies 1818-1889 (ISDEERVQIV…LASEMDGAQH (72 aa)). Residues C1840, H1844, C1860, and C1863 each coordinate Zn(2+).

Belongs to the ZNFX1 family. Interacts with MAVS.

The protein resides in the mitochondrion outer membrane. The protein localises to the cytoplasm. It localises to the stress granule. Its function is as follows. RNA-binding protein that initiates the antiviral response and is required to restrict the replication of RNA viruses. Acts as a double-stranded RNA (dsRNA) sensor that recognizes viral RNA and then interacts with MAVS to initiate the type I interferon response. Also required for immunity against some bacteria, such as mycobacteria. The protein is NFX1-type zinc finger-containing protein 1 of Mus musculus (Mouse).